Here is a 338-residue protein sequence, read N- to C-terminus: 1-aminocyclopropane-1-carboxylate deaminase (338 aa).

Position 51 is an N6-(pyridoxal phosphate)lysine (Lys51). The active-site Nucleophile is the Ser78.

It belongs to the ACC deaminase/D-cysteine desulfhydrase family. In terms of assembly, homotrimer. It depends on pyridoxal 5'-phosphate as a cofactor.

The catalysed reaction is 1-aminocyclopropane-1-carboxylate + H2O = 2-oxobutanoate + NH4(+). In terms of biological role, catalyzes a cyclopropane ring-opening reaction, the irreversible conversion of 1-aminocyclopropane-1-carboxylate (ACC) to ammonia and alpha-ketobutyrate. Allows growth on ACC as a nitrogen source. The sequence is that of 1-aminocyclopropane-1-carboxylate deaminase from Burkholderia multivorans (strain ATCC 17616 / 249).